The sequence spans 512 residues: Kynurenine 3-monooxygenase (512 aa).

It belongs to the aromatic-ring hydroxylase family. KMO subfamily. Requires FAD as cofactor.

Its subcellular location is the mitochondrion outer membrane. The catalysed reaction is L-kynurenine + NADPH + O2 + H(+) = 3-hydroxy-L-kynurenine + NADP(+) + H2O. It participates in cofactor biosynthesis; NAD(+) biosynthesis; quinolinate from L-kynurenine: step 1/3. Its function is as follows. Catalyzes the hydroxylation of L-kynurenine (L-Kyn) to form 3-hydroxy-L-kynurenine (L-3OHKyn). Required for synthesis of quinolinic acid. This is Kynurenine 3-monooxygenase (bna4) from Neosartorya fischeri (strain ATCC 1020 / DSM 3700 / CBS 544.65 / FGSC A1164 / JCM 1740 / NRRL 181 / WB 181) (Aspergillus fischerianus).